The following is a 678-amino-acid chain: Putative pentatricopeptide repeat-containing protein At3g18840 (678 aa).

PPR repeat units lie at residues 22–56, 57–84, 85–116, 124–158, 159–190, 192–222, 224–258, 259–293, 294–324, 325–359, 360–390, 392–426, 427–457, 458–492, 493–528, and 529–563; these read TAVSSNQLVNLYSKSGLLREARNVFDEMLERNVYS, WNAVIAAYVKFNNVKEARELFESDNCER, DLITYNTLLSGFAKTDGCESEAIEMFGEMHRK, DDFTVTTMVKLSAKLTNVFYGEQLHGVLVKTGNDG, TKFAVSSLIHMYSKCGKFKEVCNIFNGSCVEF, DSVARNAMIAAYCREGDIDKALSVFWRNPEL, DTISWNTLIAGYAQNGYEEEALKMAVSMEENGLKW, DEHSFGAVLNVLSSLKSLKIGKEVHARVLKNGSYS, NKFVSSGIVDVYCKCGNMKYAESAHLLYGFG, NLYSASSMIVGYSSQGKMVEAKRLFDSLSEKNLVV, WTAMFLGYLNLRQPDSVLELARAFIANETNT, DSLVMVSVLGACSLQAYMEPGKEIHGHSLRTGILM, DKKLVTAFVDMYSKCGNVEYAERIFDSSFER, DTVMYNAMIAGCAHHGHEAKSFQHFEDMTEGGFKP, DEITFMALLSACRHRGLVLEGEKYFKSMIEAYNISP, and ETGHYTCMIDLYGKAYRLDKAIELMEGIDQVEKDA. The tract at residues 565-640 is type E motif; that stretch reads ILGAFLNACS…FSGCSWANID (76 aa). A type E(+) motif region spans residues 641–671; the sequence is KQFHMFTSSDISHYETEAIYAMLHFVTKDLS.

The protein belongs to the PPR family. PCMP-E subfamily.

This Arabidopsis thaliana (Mouse-ear cress) protein is Putative pentatricopeptide repeat-containing protein At3g18840 (PCMP-E92).